A 360-amino-acid chain; its full sequence is Phospho-N-acetylmuramoyl-pentapeptide-transferase (360 aa).

The next 10 helical transmembrane spans lie at 27-47, 71-91, 94-114, 132-152, 168-188, 199-219, 236-256, 263-283, 288-308, and 338-358; these read IVSL…MIAF, TPTM…LLWV, NNPY…VGFV, WKYF…YSFG, VMPQ…VGTS, GLAI…AWAT, AGEL…FLWF, VFMG…IAVL, FLLV…ILQV, and VIVR…ATLK.

It belongs to the glycosyltransferase 4 family. MraY subfamily. Mg(2+) serves as cofactor.

It localises to the cell inner membrane. The catalysed reaction is UDP-N-acetyl-alpha-D-muramoyl-L-alanyl-gamma-D-glutamyl-meso-2,6-diaminopimeloyl-D-alanyl-D-alanine + di-trans,octa-cis-undecaprenyl phosphate = di-trans,octa-cis-undecaprenyl diphospho-N-acetyl-alpha-D-muramoyl-L-alanyl-D-glutamyl-meso-2,6-diaminopimeloyl-D-alanyl-D-alanine + UMP. Its pathway is cell wall biogenesis; peptidoglycan biosynthesis. Catalyzes the initial step of the lipid cycle reactions in the biosynthesis of the cell wall peptidoglycan: transfers peptidoglycan precursor phospho-MurNAc-pentapeptide from UDP-MurNAc-pentapeptide onto the lipid carrier undecaprenyl phosphate, yielding undecaprenyl-pyrophosphoryl-MurNAc-pentapeptide, known as lipid I. The polypeptide is Phospho-N-acetylmuramoyl-pentapeptide-transferase (Photorhabdus laumondii subsp. laumondii (strain DSM 15139 / CIP 105565 / TT01) (Photorhabdus luminescens subsp. laumondii)).